Consider the following 48-residue polypeptide: Sperm protamine P1 (48 aa).

This sequence belongs to the protamine P1 family. In terms of tissue distribution, testis.

It localises to the nucleus. Its subcellular location is the chromosome. Its function is as follows. Protamines substitute for histones in the chromatin of sperm during the haploid phase of spermatogenesis. They compact sperm DNA into a highly condensed, stable and inactive complex. The chain is Sperm protamine P1 (PRM1) from Eptesicus fuscus (Big brown bat).